Here is a 1238-residue protein sequence, read N- to C-terminus: DNA-directed RNA polymerase subunit beta (1238 aa).

Residues 1187–1238 (EGREDTPPEEVYEESYEEGFEEEIEELPEDIDFEPDSFDIENDDLDLEDFDI) form a disordered region. Positions 1193–1238 (PPEEVYEESYEEGFEEEIEELPEDIDFEPDSFDIENDDLDLEDFDI) are enriched in acidic residues.

Belongs to the RNA polymerase beta chain family. In terms of assembly, the RNAP catalytic core consists of 2 alpha, 1 beta, 1 beta' and 1 omega subunit. When a sigma factor is associated with the core the holoenzyme is formed, which can initiate transcription.

It carries out the reaction RNA(n) + a ribonucleoside 5'-triphosphate = RNA(n+1) + diphosphate. DNA-dependent RNA polymerase catalyzes the transcription of DNA into RNA using the four ribonucleoside triphosphates as substrates. This is DNA-directed RNA polymerase subunit beta from Thermoanaerobacter pseudethanolicus (strain ATCC 33223 / 39E) (Clostridium thermohydrosulfuricum).